We begin with the raw amino-acid sequence, 345 residues long: Myb/SANT-like DNA-binding domain-containing protein 4 (345 aa).

The Myb-like domain occupies Leu-4–Arg-77. A Glycyl lysine isopeptide (Lys-Gly) (interchain with G-Cter in SUMO2) cross-link involves residue Lys-9. Ser-106 is modified (phosphoserine). Residues Lys-114 and Lys-142 each participate in a glycyl lysine isopeptide (Lys-Gly) (interchain with G-Cter in SUMO2) cross-link. Positions Val-143–Asn-175 are disordered. Phosphothreonine is present on Thr-188. Residues Leu-203–Gln-345 adopt a coiled-coil conformation. Residues Lys-237, Lys-254, and Lys-273 each participate in a glycyl lysine isopeptide (Lys-Gly) (interchain with G-Cter in SUMO2) cross-link.

The chain is Myb/SANT-like DNA-binding domain-containing protein 4 (MSANTD4) from Homo sapiens (Human).